We begin with the raw amino-acid sequence, 810 residues long: Plasminogen (810 aa).

Positions 1 to 19 (MEHKEVVLLLLLFLKSGQG) are cleaved as a signal peptide. The PAN domain maps to 20-98 (EPLDDYVNTQ…RDVVLFEKKV (79 aa)). 12 cysteine pairs are disulfide-bonded: Cys49/Cys73, Cys53/Cys61, Cys103/Cys181, Cys124/Cys164, Cys152/Cys176, Cys185/Cys262, Cys188/Cys316, Cys206/Cys245, Cys234/Cys257, Cys275/Cys352, Cys296/Cys335, and Cys324/Cys347. 2 consecutive Kringle domains span residues 103-181 (CKTG…ILEC) and 184-262 (ECMH…IPRC). Residues 126–145 (KWSSTSPHRPRFSPATHPSE) form a disordered region. Residues Arg136, Asp158, and Arg172 each coordinate L-lysine. Ser268 is a glycosylation site (O-linked (GalNAc...) serine). Residues 275-352 (CLKGTGENYR…RWEYCKIPSC (78 aa)) form the Kringle 3 domain. Asn308 carries an N-linked (GlcNAc...) asparagine glycan. Thr365 carries O-linked (GalNAc...) threonine glycosylation. Cystine bridges form between Cys377-Cys454, Cys398-Cys437, Cys426-Cys449, Cys481-Cys560, Cys502-Cys543, Cys531-Cys555, Cys567-Cys685, Cys577-Cys585, and Cys607-Cys623. Kringle domains lie at 377-454 (CYHG…LKKC) and 481-560 (CMFG…VPQC). The interval 396–416 (KKCQSWSSMTPHRHQKTPENY) is disordered. Positions 432 and 445 each coordinate L-lysine. Residues 581–808 (VVGGCVAHPH…FVTWIEGVMR (228 aa)) form the Peptidase S1 domain. Position 597 is a phosphoserine (Ser597). Residues His622 and Asp665 each act as charge relay system in the active site. Ser688 carries the phosphoserine modification. Cystine bridges form between Cys699–Cys766, Cys729–Cys745, and Cys756–Cys784. Catalysis depends on Ser760, which acts as the Charge relay system.

It belongs to the peptidase S1 family. Plasminogen subfamily. As to quaternary structure, interacts (both mature PLG and the angiostatin peptide) with CSPG4 and AMOT. Interacts (via the Kringle domains) with HRG; the interaction tethers PLG to the cell surface and enhances its activation. Interacts (via Kringle 4 domain) with ADA; the interaction stimulates PLG activation when in complex with DPP4. Angiostatin: Interacts with ATP5F1A; the interaction inhibits most of the angiogenic effects of angiostatin. Interacts (plasmin) with iripin-8, a serine protease inhibitor from Ixodes ricinus saliva. Interacts (plasmin) with iripin-1, a serine protease inhibitor from Ixodes ricinus saliva. Interacts (plasmin) with Kazal-type trypsin inhibitor, a serine protease inhibitor from Aedes aegypti. (Microbial infection) Interacts with C.albicans GPD2; the interaction is direct and provides active plasmin on the surface of fungal cells. In terms of assembly, (Microbial infection) Interacts with Staphylococcus aureus protein FnbB; this interaction provides active plasmin on the surface of bacterial cells. As to quaternary structure, (Microbial infection) Interacts with P.falciparum (strain NF54) enolase ENO (via DKSLVK motif); the interaction occurs at the ookinete cell surface and is required for ookinete invasion of the mosquito midgut. (Microbial infection) Interacts with B.burgdorferi OspC. N-linked glycan contains N-acetyllactosamine and sialic acid. O-linked glycans consist of Gal-GalNAc disaccharide modified with up to 2 sialic acid residues (microheterogeneity). Post-translationally, in the presence of the inhibitor, the activation involves only cleavage after Arg-580, yielding two chains held together by two disulfide bonds. In the absence of the inhibitor, the activation involves additionally the removal of the activation peptide. In terms of processing, (Microbial infection) The Y.pestis Pla protein cleaves between Arg-580 and Val-581, generating plasmin which facilitates bacterial migration and infection. In terms of tissue distribution, present in plasma and many other extracellular fluids. It is synthesized in the liver.

The protein resides in the secreted. It carries out the reaction Preferential cleavage: Lys-|-Xaa &gt; Arg-|-Xaa, higher selectivity than trypsin. Converts fibrin into soluble products.. With respect to regulation, converted into plasmin by plasminogen activators, both plasminogen and its activator being bound to fibrin. Activated with catalytic amounts of streptokinase. Plasmin activity inhibited by SERPINE2. Functionally, plasmin dissolves the fibrin of blood clots and acts as a proteolytic factor in a variety of other processes including embryonic development, tissue remodeling, tumor invasion, and inflammation. In ovulation, weakens the walls of the Graafian follicle. It activates the urokinase-type plasminogen activator, collagenases and several complement zymogens, such as C1, C4 and C5. Cleavage of fibronectin and laminin leads to cell detachment and apoptosis. Also cleaves fibrin, thrombospondin and von Willebrand factor. Its role in tissue remodeling and tumor invasion may be modulated by CSPG4. Binds to cells. Angiostatin is an angiogenesis inhibitor that blocks neovascularization and growth of experimental primary and metastatic tumors in vivo. In terms of biological role, (Microbial infection) ENO/enoloase from parasite P.falciparum (strain NF54) interacts with PLG present in the mosquito blood meal to promote the invasion of the mosquito midgut by the parasite ookinete. The catalytic active form, plasmin, is essential for the invasion of the mosquito midgut. Its function is as follows. (Microbial infection) Binds to OspC on the surface of B.burgdorferi cells, possibly conferring an extracellular protease activity on the bacteria that allows it to traverse host tissue. Functionally, (Microbial infection) Interacts with dengue virus type 2 particles. Enhances dengue virus type 2 infection in Aedes aegypti mosquito midgut by increasing midgut internalization, resulting in higher infection rates and viral dissemination in mosquitoes. This is Plasminogen (PLG) from Homo sapiens (Human).